Here is a 387-residue protein sequence, read N- to C-terminus: Homoserine O-succinyltransferase (387 aa).

Residues 45 to 354 (NAVLVCHALN…DAPHGHDAFL (310 aa)) enclose the AB hydrolase-1 domain. Residue Ser-151 is the Nucleophile of the active site. Arg-221 is a substrate binding site. Catalysis depends on residues Asp-317 and His-350. Asp-351 is a substrate binding site.

It belongs to the AB hydrolase superfamily. MetX family. As to quaternary structure, homodimer.

It localises to the cytoplasm. It carries out the reaction L-homoserine + succinyl-CoA = O-succinyl-L-homoserine + CoA. It participates in amino-acid biosynthesis; L-methionine biosynthesis via de novo pathway; O-succinyl-L-homoserine from L-homoserine: step 1/1. Transfers a succinyl group from succinyl-CoA to L-homoserine, forming succinyl-L-homoserine. The protein is Homoserine O-succinyltransferase of Methylibium petroleiphilum (strain ATCC BAA-1232 / LMG 22953 / PM1).